A 140-amino-acid chain; its full sequence is Putative pre-16S rRNA nuclease (140 aa).

This sequence belongs to the YqgF nuclease family.

Its subcellular location is the cytoplasm. Functionally, could be a nuclease involved in processing of the 5'-end of pre-16S rRNA. In Vibrio cholerae serotype O1 (strain ATCC 39541 / Classical Ogawa 395 / O395), this protein is Putative pre-16S rRNA nuclease.